Here is a 440-residue protein sequence, read N- to C-terminus: Enolase (440 aa).

The segment at 120-189 (KAAAAEKRVP…TEAMRQGAEV (70 aa)) is igE-binding determinant. Substrate contacts are provided by His-159 and Glu-168. Glu-211 functions as the Proton donor in the catalytic mechanism. Asp-246, Glu-297, and Asp-324 together coordinate Mg(2+). 2 residues coordinate substrate: Glu-297 and Asp-324. Lys-349 (proton acceptor) is an active-site residue. Residues 376–379 (SHRS) and Lys-400 each bind substrate.

Belongs to the enolase family. In terms of assembly, homodimer. Requires Mg(2+) as cofactor.

It is found in the cytoplasm. It carries out the reaction (2R)-2-phosphoglycerate = phosphoenolpyruvate + H2O. Its pathway is carbohydrate degradation; glycolysis; pyruvate from D-glyceraldehyde 3-phosphate: step 4/5. This is Enolase (ENO) from Davidiella tassiana (Mycosphaerella tassiana).